A 768-amino-acid chain; its full sequence is Translation factor GUF1 homolog, mitochondrial (768 aa).

The transit peptide at Met-1–Cys-29 directs the protein to the mitochondrion. Positions Ser-110–Ser-293 constitute a tr-type G domain. GTP-binding positions include Ala-119–Thr-126, Asp-184–His-188, and Thr-238–Asp-241.

The protein belongs to the TRAFAC class translation factor GTPase superfamily. Classic translation factor GTPase family. LepA subfamily.

The protein localises to the mitochondrion inner membrane. The catalysed reaction is GTP + H2O = GDP + phosphate + H(+). Functionally, promotes mitochondrial protein synthesis. May act as a fidelity factor of the translation reaction, by catalyzing a one-codon backward translocation of tRNAs on improperly translocated ribosomes. Binds to mitochondrial ribosomes in a GTP-dependent manner. The sequence is that of Translation factor GUF1 homolog, mitochondrial from Trypanosoma brucei brucei (strain 927/4 GUTat10.1).